We begin with the raw amino-acid sequence, 206 residues long: Macrophage immunometabolism regulator (206 aa).

The residue at position 1 (methionine 1) is an N-acetylmethionine. Residues 1 to 41 form a disordered region; sequence MEVDINGESRSTLTTLPFPGAEANSPGKAEAEKPRCSSTPC. 3 positions are modified to phosphoserine: serine 25, serine 140, and serine 167.

Belongs to the UNC119-binding protein family. In terms of assembly, interacts with UNC119 and UNC119B; interaction preferentially takes place when UNC119 and UNC119B are unliganded with myristoylated proteins. Post-translationally, phosphorylated. As to expression, high expression in normal macrophages, monocytes, and cultured rheumatoid arthritis synovial fibroblasts (RASFs), with lower expression in B- and T-cells, and little to no expression in other tissues and cell lines.

The protein localises to the cytoplasm. The protein resides in the cell projection. It is found in the cilium. Its function is as follows. Regulates the macrophage function, by enhancing the resolution of inflammation and wound repair functions mediated by M2 macrophages. The regulation of macrophage function is, due at least in part, to its ability to inhibit glycolysis. May also play a role in trafficking of proteins via its interaction with UNC119 and UNC119B cargo adapters: may help the release of UNC119 and UNC119B cargo or the recycling of UNC119 and UNC119B. May play a role in ciliary membrane localization via its interaction with UNC119B and protein transport into photoreceptor cells. The chain is Macrophage immunometabolism regulator from Homo sapiens (Human).